Here is a 263-residue protein sequence, read N- to C-terminus: Proteasome subunit beta type-4 (263 aa).

Methionine 1 carries the N-acetylmethionine modification. Residues 1-44 (MEAFWESRTGHWAGGPAPGQFYRVPSTPSCLMDPMSAPARPITR) constitute a propeptide that is removed on maturation. Phosphoserine is present on serine 26. Phosphotyrosine is present on tyrosine 101.

It belongs to the peptidase T1B family. In terms of assembly, the 26S proteasome consists of a 20S proteasome core and two 19S regulatory subunits. The 20S proteasome core is a barrel-shaped complex made of 28 subunits that are arranged in four stacked rings. The two outer rings are each formed by seven alpha subunits, and the two inner rings are formed by seven beta subunits. The proteolytic activity is exerted by three beta-subunits PSMB5, PSMB6 and PSMB7. Forms a ternary complex with SMAD1 and OAZ1 before PSMB4 is incorporated into the 20S proteasome. Interacts with PRPF19.

It localises to the cytoplasm. Its subcellular location is the nucleus. Non-catalytic component of the 20S core proteasome complex involved in the proteolytic degradation of most intracellular proteins. This complex plays numerous essential roles within the cell by associating with different regulatory particles. Associated with two 19S regulatory particles, forms the 26S proteasome and thus participates in the ATP-dependent degradation of ubiquitinated proteins. The 26S proteasome plays a key role in the maintenance of protein homeostasis by removing misfolded or damaged proteins that could impair cellular functions, and by removing proteins whose functions are no longer required. Associated with the PA200 or PA28, the 20S proteasome mediates ubiquitin-independent protein degradation. This type of proteolysis is required in several pathways including spermatogenesis (20S-PA200 complex) or generation of a subset of MHC class I-presented antigenic peptides (20S-PA28 complex). SMAD1/OAZ1/PSMB4 complex mediates the degradation of the CREBBP/EP300 repressor SNIP1. This Rattus norvegicus (Rat) protein is Proteasome subunit beta type-4 (Psmb4).